A 424-amino-acid chain; its full sequence is MFVDKARIFVKSGDGGDGAVSFRREKYIPLGGPDGGDGGEGGDVILVVDPNMTTLLDFKYKRKYVSERGQNGQGAKCYGRDGKDLYIKVPMGTIIRDVETDKIMADLAHKDDKFVIVKGGRGGKGNVKFCTPTRQAPNFAQPGMPGEERWISLELKLLADVGLIGFPNVGKSTLLSVASKARPKIANYHFTTITPNLGVVDVSGISSFVMADIPGIIEGASEGVGLGFEFLRHIERTRLLVHVVDISGSEGRDPLEDFLKINEELKKYNIKLWDRPQIVAANKADMVYDDDQFNKFREELNKLGYKNVFKISAATRMGVEDLLKECARVLSTIPVTDMEIPEEERFVPEDKHFTYTIRKEGDTYIVEGTFVDRLLASVNVNEPDSFRYFHKVLRNKGVMAELEEMGIKDGDMVRLNDFEFEFLK.

Residues 1–158 (MFVDKARIFV…RWISLELKLL (158 aa)) enclose the Obg domain. The region spanning 159-331 (ADVGLIGFPN…LLKECARVLS (173 aa)) is the OBG-type G domain. Residues 165–172 (GFPNVGKS), 190–194 (FTTIT), 212–215 (DIPG), 282–285 (NKAD), and 312–314 (SAA) each bind GTP. Mg(2+) contacts are provided by Ser-172 and Thr-192. The OCT domain maps to 345-424 (RFVPEDKHFT…LNDFEFEFLK (80 aa)).

It belongs to the TRAFAC class OBG-HflX-like GTPase superfamily. OBG GTPase family. In terms of assembly, monomer. The cofactor is Mg(2+).

It localises to the cytoplasm. Functionally, an essential GTPase which binds GTP, GDP and possibly (p)ppGpp with moderate affinity, with high nucleotide exchange rates and a fairly low GTP hydrolysis rate. Plays a role in control of the cell cycle, stress response, ribosome biogenesis and in those bacteria that undergo differentiation, in morphogenesis control. This Clostridium acetobutylicum (strain ATCC 824 / DSM 792 / JCM 1419 / IAM 19013 / LMG 5710 / NBRC 13948 / NRRL B-527 / VKM B-1787 / 2291 / W) protein is GTPase Obg.